Consider the following 550-residue polypeptide: Hydroxylamine reductase (550 aa).

Residues Cys3, Cys6, Cys18, and Cys25 each coordinate [2Fe-2S] cluster. Hybrid [4Fe-2O-2S] cluster-binding residues include His249, Glu273, Cys317, Cys405, Cys433, Cys458, Glu492, and Lys494. Position 405 is a cysteine persulfide (Cys405).

It belongs to the HCP family. Requires [2Fe-2S] cluster as cofactor. The cofactor is hybrid [4Fe-2O-2S] cluster.

Its subcellular location is the cytoplasm. It catalyses the reaction A + NH4(+) + H2O = hydroxylamine + AH2 + H(+). In terms of biological role, catalyzes the reduction of hydroxylamine to form NH(3) and H(2)O. The protein is Hydroxylamine reductase of Escherichia coli (strain SE11).